The following is a 269-amino-acid chain: MEHNNNPGTPQMSSEFPASTTQTSSSAAAYDNSSHFEKEQSLMRWEQDLKLRERALANNQSAADITGPHVVVPAPATAHPRQANFPSSYPMIRLNLEEDIAIREYRQIVKFGIFVFLWEAAALVYNWVVSIGTIVYSAVDNFFLALFYMIVGVPTLYFLTRKLYRAASVPERARKSYAYLMALLGVVLFNIIFFVGFKRSGMNGLIWVISLFHNDHNAVGAMATVSLFFWFVGVFLTIALFIMYLRLNNTKRQRGEIQNAGFREYIKSR.

The segment covering 1–17 (MEHNNNPGTPQMSSEFP) has biased composition (polar residues). The segment at 1 to 35 (MEHNNNPGTPQMSSEFPASTTQTSSSAAAYDNSSH) is disordered. Residues 18 to 29 (ASTTQTSSSAAA) show a composition bias toward low complexity. 4 helical membrane passes run 111–131 (FGIFVFLWEAAALVYNWVVSI), 139–159 (VDNFFLALFYMIVGVPTLYFL), 177–197 (YAYLMALLGVVLFNIIFFVGF), and 225–245 (VSLFFWFVGVFLTIALFIMYL).

The protein belongs to the SCAMP family.

It localises to the membrane. The protein resides in the spore coat. This Dictyostelium discoideum (Social amoeba) protein is Prespore protein Dd31 (spiA).